The primary structure comprises 154 residues: Large ribosomal subunit protein uL16 (154 aa).

It belongs to the universal ribosomal protein uL16 family. As to quaternary structure, part of the 50S ribosomal subunit.

Binds 23S rRNA and is also seen to make contacts with the A and possibly P site tRNAs. This is Large ribosomal subunit protein uL16 from Synechococcus sp. (strain RCC307).